A 308-amino-acid polypeptide reads, in one-letter code: MYYNHKNVLDTEQFSKPDLDFLIGKIRVMERLVEQNKAFGILTGKLLASLFFEASTRTRLSFEAAMERLGGRVISTVGFQFSSISKGETLYDTMKMVEAYADIAVIRHPVEGSSRIAAGAVKIPVINAGDGAGQHPTQAILDLYTIISEKGTLDGLTVAFIGDLKYGRTIHSLINLLRHYKVRLFLISPPELALPESYKKALQGYSLTLEETTDIKAVWDCDVAYVTRIQEERFPDHKEYERLKDLFKINKELILASKKETTVLHPLPRVNELSTDVDDLPNAAYFRQARYGVVSRMTLLCLSLGQDF.

2 residues coordinate carbamoyl phosphate: arginine 57 and threonine 58. Lysine 86 contributes to the L-aspartate binding site. Carbamoyl phosphate-binding residues include arginine 107, histidine 135, and glutamine 138. The L-aspartate site is built by arginine 168 and arginine 228. Residues leucine 267 and proline 268 each contribute to the carbamoyl phosphate site.

Belongs to the aspartate/ornithine carbamoyltransferase superfamily. ATCase family. Heterododecamer (2C3:3R2) of six catalytic PyrB chains organized as two trimers (C3), and six regulatory PyrI chains organized as three dimers (R2).

The catalysed reaction is carbamoyl phosphate + L-aspartate = N-carbamoyl-L-aspartate + phosphate + H(+). It functions in the pathway pyrimidine metabolism; UMP biosynthesis via de novo pathway; (S)-dihydroorotate from bicarbonate: step 2/3. Catalyzes the condensation of carbamoyl phosphate and aspartate to form carbamoyl aspartate and inorganic phosphate, the committed step in the de novo pyrimidine nucleotide biosynthesis pathway. The protein is Aspartate carbamoyltransferase catalytic subunit of Leptospira interrogans serogroup Icterohaemorrhagiae serovar Lai (strain 56601).